Consider the following 1777-residue polypeptide: Fatty acid synthase subunit alpha (1777 aa).

The segment at 101–124 is disordered; it reads APVESADNEPAQPAASSTPAAPAP. The span at 110 to 120 shows a compositional bias: low complexity; sequence PAQPAASSTPA. Residues 151 to 237 enclose the Carrier domain; that stretch reads LSAIDVVISI…KVMGGHIDRL (87 aa). An O-(pantetheine 4'-phosphoryl)serine modification is found at Ser186. The segment at 563-803 is ketoreductase (KR) domain; it reads FTGRRVLVTG…ILSLLSGDIL (241 aa). In terms of domain architecture, Ketosynthase family 3 (KS3) spans 1007 to 1539; the sequence is KEIMHEVVID…QKGGLVVGIA (533 aa). Residues Cys1193, His1424, and His1465 each act as for beta-ketoacyl synthase activity in the active site. Residue Asp1661 participates in Mg(2+) binding. Acetyl-CoA-binding positions include 1661–1663, 1706–1716, 1730–1734, and 1760–1762; these read DIE, EAIFKSLQIPS, SNGAQ, and ITH.

This sequence belongs to the thiolase-like superfamily. Fungal fatty acid synthetase subunit alpha family. In terms of assembly, fatty acid synthase is composed of alpha and beta subunits.

It carries out the reaction acetyl-CoA + n malonyl-CoA + 2n NADPH + 4n H(+) = a long-chain-acyl-CoA + n CoA + n CO2 + 2n NADP(+).. It catalyses the reaction a fatty acyl-[ACP] + malonyl-[ACP] + H(+) = a 3-oxoacyl-[ACP] + holo-[ACP] + CO2. The catalysed reaction is a (3R)-hydroxyacyl-[ACP] + NADP(+) = a 3-oxoacyl-[ACP] + NADPH + H(+). Its pathway is secondary metabolite biosynthesis. In terms of biological role, fatty acid synthase alpha subunit; part of the gene cluster that mediates the biosynthesis of oryzines, natural products with an unusual maleidride backbone. The two subunits of the fungal fatty acid synthase oryfasA and oryfasB probably form octenoic acid. This fatty acid is most likely activated by the acyl-CoA ligase oryP to give octenyl-CoA before the citrate synthase-like protein oryE catalyzes condensation with oxaloacetate to form tricarboxylic acid. The next steps of the pathways are conjectural, but a favorite possible route has been proposed, beginning with decarboxylation and concomitant dehydration by the decarboxylase oryM, followed by tautomerization, which may lead to the production of a diene intermediate. Reduction of this diene intermediate could give the known metabolite piliformic acid. On the pathway to oryzine B and oryzine A, however, hydroxylation of the diene by the alpha-ketoglutarate-dependent dioxygenase oryG and lactonisation by the lactonohydrolases oryH or oryL could give oryzine B directly. Finally, enoyl reduction by the dehydrogenase oryD would then convert oryzine B into oryzine A. This is Fatty acid synthase subunit alpha from Aspergillus oryzae (strain ATCC 42149 / RIB 40) (Yellow koji mold).